The primary structure comprises 692 residues: Elongation factor G (692 aa).

In terms of domain architecture, tr-type G spans 8 to 282 (ENTRNIGIMA…AVIDYLPSPL (275 aa)). Residues 17-24 (AHIDAGKT), 81-85 (DTPGH), and 135-138 (NKMD) each bind GTP.

Belongs to the TRAFAC class translation factor GTPase superfamily. Classic translation factor GTPase family. EF-G/EF-2 subfamily.

The protein resides in the cytoplasm. Its function is as follows. Catalyzes the GTP-dependent ribosomal translocation step during translation elongation. During this step, the ribosome changes from the pre-translocational (PRE) to the post-translocational (POST) state as the newly formed A-site-bound peptidyl-tRNA and P-site-bound deacylated tRNA move to the P and E sites, respectively. Catalyzes the coordinated movement of the two tRNA molecules, the mRNA and conformational changes in the ribosome. This is Elongation factor G from Bacillus cereus (strain Q1).